We begin with the raw amino-acid sequence, 563 residues long: MDYKNLVAERIKENTELEVDLIEKLIEIPPKKEMGDYAFPCFQLAKTFRKAPNLIAEELKEKINKEGFEKVVTVGPYLNFFVDKTILIKDVLEKVLSEKEKYGSSKVGEGKNVVVEYSSPNIAKPFHIGHLFTTAIGNALYKILSFEGYNCIGINHLGDWGTQFGKLISAYRRWVDEEALEKDAIGELLRIYVKFHEEAEKDPELEKEARLNFKRLEDGSEEETELWNRFKDLSLKEFNKVYDMLGIKFDSLAGESFYSDKMDAVVQEIDDKGLLVDSNGAKVVMLDEYNMPPCMIKKSDGATIYATRDLAAAIYRKKTYDFHKCIYVVGTPQALHFKQVFTTLKLMGHDWADDCKHVGFGLVKLANKKLSTRNGDVVFLEDLLNQSVEETLKIINEKNPNLKNKEDVAKKLGIGAVVFTYLKNNRERDIVFDWKEILSFDGETGPYVEYSYARGKSILRKAGELTGEADYSKLSSKEEFELAKLLGGFNDAIMNAIDKLEPAMVTRYIIEVAKAFNKFYNAHGILNAEDNDVKLARVKLVEATCQVIKNALNLLGIDVVEEM.

The 'HIGH' region motif lies at proline 120 to histidine 130.

Belongs to the class-I aminoacyl-tRNA synthetase family. As to quaternary structure, monomer.

The protein resides in the cytoplasm. It catalyses the reaction tRNA(Arg) + L-arginine + ATP = L-arginyl-tRNA(Arg) + AMP + diphosphate. The chain is Arginine--tRNA ligase from Clostridium botulinum (strain Okra / Type B1).